A 1608-amino-acid polypeptide reads, in one-letter code: Adenylate cyclase type 10 (1608 aa).

Guanylate cyclase domains follow at residues 42-179 (VLMF…RLAQ) and 293-418 (TIVF…ARMM). Mg(2+) contacts are provided by Asp47 and Ile48. Residue 47-52 (DISGFT) coordinates ATP. Hydrogencarbonate is bound at residue Lys95. Asp99 lines the Mg(2+) pocket. Residues Asp99 and Lys144 each contribute to the ATP site. Hydrogencarbonate-binding residues include Val167, Arg176, and Met337. Residues Val406 and 412–416 (NIAAR) each bind ATP.

The protein belongs to the adenylyl cyclase class-4/guanylyl cyclase family. It depends on Mg(2+) as a cofactor. The cofactor is Mn(2+). In terms of processing, cleavage may occur to generate the active 48 kDa form. In terms of tissue distribution, detected in testis (at protein level). Preferentially expressed in testis.

It localises to the cell membrane. It is found in the cytoplasm. Its subcellular location is the cytoskeleton. The protein resides in the perinuclear region. The protein localises to the nucleus. It localises to the cell projection. It is found in the cilium. Its subcellular location is the mitochondrion. The catalysed reaction is ATP = 3',5'-cyclic AMP + diphosphate. With respect to regulation, activated by manganese or magnesium ions. In the presence of magnesium ions, the enzyme is activated by bicarbonate. Calcium mildly increases the enzyme activity, also in the presence of magnesium ions. In terms of biological role, catalyzes the formation of the signaling molecule cAMP. May function as sensor that mediates responses to changes in cellular bicarbonate and CO(2) levels. Has a critical role in mammalian spermatogenesis by producing the cAMP which regulates cAMP-responsive nuclear factors indispensable for sperm maturation in the epididymis. Induces capacitation, the maturational process that sperm undergo prior to fertilization. Involved in ciliary beat regulation. This is Adenylate cyclase type 10 (Adcy10) from Rattus norvegicus (Rat).